The following is a 255-amino-acid chain: Geranylgeranylglyceryl phosphate synthase (255 aa).

Positions 31 and 60 each coordinate Mg(2+). Residues 179–185 (YLEAGSG), 211–212 (GG), and 233–234 (GT) contribute to the sn-glycerol 1-phosphate site.

This sequence belongs to the GGGP/HepGP synthase family. Group II subfamily. It depends on Mg(2+) as a cofactor.

It localises to the cytoplasm. It carries out the reaction sn-glycerol 1-phosphate + (2E,6E,10E)-geranylgeranyl diphosphate = sn-3-O-(geranylgeranyl)glycerol 1-phosphate + diphosphate. The protein operates within membrane lipid metabolism; glycerophospholipid metabolism. In terms of biological role, prenyltransferase that catalyzes the transfer of the geranylgeranyl moiety of geranylgeranyl diphosphate (GGPP) to the C3 hydroxyl of sn-glycerol-1-phosphate (G1P). This reaction is the first ether-bond-formation step in the biosynthesis of archaeal membrane lipids. In Methanothrix thermoacetophila (strain DSM 6194 / JCM 14653 / NBRC 101360 / PT) (Methanosaeta thermophila), this protein is Geranylgeranylglyceryl phosphate synthase.